A 296-amino-acid chain; its full sequence is 4-hydroxybenzoate octaprenyltransferase (296 aa).

8 helical membrane passes run 28-48 (PIGI…AGKG), 52-72 (LKTV…GCVI), 102-122 (ALAL…FTNA), 146-166 (YYPQ…AFTA), 169-189 (GDLP…TVGY), 219-239 (VIIL…GARF), 241-261 (LGAC…WEFW), and 275-295 (FLHN…DYAV).

It belongs to the UbiA prenyltransferase family. Mg(2+) serves as cofactor.

The protein localises to the cell inner membrane. It catalyses the reaction all-trans-octaprenyl diphosphate + 4-hydroxybenzoate = 4-hydroxy-3-(all-trans-octaprenyl)benzoate + diphosphate. The protein operates within cofactor biosynthesis; ubiquinone biosynthesis. In terms of biological role, catalyzes the prenylation of para-hydroxybenzoate (PHB) with an all-trans polyprenyl group. Mediates the second step in the final reaction sequence of ubiquinone-8 (UQ-8) biosynthesis, which is the condensation of the polyisoprenoid side chain with PHB, generating the first membrane-bound Q intermediate 3-octaprenyl-4-hydroxybenzoate. The polypeptide is 4-hydroxybenzoate octaprenyltransferase (Pseudomonas savastanoi pv. phaseolicola (strain 1448A / Race 6) (Pseudomonas syringae pv. phaseolicola (strain 1448A / Race 6))).